Consider the following 496-residue polypeptide: Probable chlorophyll(ide) b reductase NYC1, chloroplastic (496 aa).

The transit peptide at 1–43 (MTTLTKIQVYPQVLEHRLFFRDPIRVGSRLTCRERSNRVYVHR) directs the protein to the chloroplast. 2 helical membrane passes run 105-125 (YIVT…LSGG) and 132-152 (LVWY…ANMV). Position 166 to 190 (166 to 190 (ITGSTRGLGKALAREFLLSGDRVIV)) interacts with NAD(+). Residues 195 to 224 (SESVDMTVKELEQNLKEIMSNASESARKKL) adopt a coiled-coil conformation. Tyr330 (proton acceptor) is an active-site residue. The chain crosses the membrane as a helical span at residues 470–490 (WVSVFSLSVVCAFIILQSTTP).

It belongs to the short-chain dehydrogenases/reductases (SDR) family. In terms of assembly, interacts with NOL to form a complex that acts as a chlorophyll b reductase. Interacts with HCAR, RCCR, SGR1 and the LHCII complex. Part of a SGR1-CCE-LHCII complex, which acts in chlorophyll breakdown.

The protein localises to the plastid. It is found in the chloroplast thylakoid membrane. It catalyses the reaction 7(1)-hydroxychlorophyllide a + NAD(+) = chlorophyllide b + NADH + H(+). The enzyme catalyses 7(1)-hydroxychlorophyllide a + NADP(+) = chlorophyllide b + NADPH + H(+). Functionally, involved in chlorophyll b degradation. Belongs to the chlorophyll catabolic enzymes (CCEs). This chain is Probable chlorophyll(ide) b reductase NYC1, chloroplastic (NYC1), found in Arabidopsis thaliana (Mouse-ear cress).